The primary structure comprises 239 residues: Ribonuclease PH (239 aa).

Phosphate contacts are provided by residues arginine 86 and 124-126; that span reads GTR.

The protein belongs to the RNase PH family. In terms of assembly, homohexameric ring arranged as a trimer of dimers.

It carries out the reaction tRNA(n+1) + phosphate = tRNA(n) + a ribonucleoside 5'-diphosphate. Functionally, phosphorolytic 3'-5' exoribonuclease that plays an important role in tRNA 3'-end maturation. Removes nucleotide residues following the 3'-CCA terminus of tRNAs; can also add nucleotides to the ends of RNA molecules by using nucleoside diphosphates as substrates, but this may not be physiologically important. Probably plays a role in initiation of 16S rRNA degradation (leading to ribosome degradation) during starvation. The polypeptide is Ribonuclease PH (Anaeromyxobacter dehalogenans (strain 2CP-C)).